Consider the following 314-residue polypeptide: L-lactate dehydrogenase 2 (314 aa).

NAD(+) is bound by residues V16, D37, K42, Y68, and 82 to 83 (GL). Substrate contacts are provided by residues Q85, R91, and 123-126 (NPVD). NAD(+) contacts are provided by residues 121-123 (ATN) and S146. 151–154 (DSAR) is a binding site for substrate. R156 and H171 together coordinate beta-D-fructose 1,6-bisphosphate. The active-site Proton acceptor is H178. Y223 is subject to Phosphotyrosine. T232 is a binding site for substrate.

This sequence belongs to the LDH/MDH superfamily. LDH family. In terms of assembly, homotetramer.

It localises to the cytoplasm. It carries out the reaction (S)-lactate + NAD(+) = pyruvate + NADH + H(+). The protein operates within fermentation; pyruvate fermentation to lactate; (S)-lactate from pyruvate: step 1/1. With respect to regulation, allosterically activated by fructose 1,6-bisphosphate (FBP). In terms of biological role, catalyzes the conversion of lactate to pyruvate. The sequence is that of L-lactate dehydrogenase 2 from Bacillus cereus (strain ATCC 14579 / DSM 31 / CCUG 7414 / JCM 2152 / NBRC 15305 / NCIMB 9373 / NCTC 2599 / NRRL B-3711).